The primary structure comprises 273 residues: Putative phosphoenolpyruvate synthase regulatory protein (273 aa).

153-160 (GVSRSGKT) is a binding site for ADP.

The protein belongs to the pyruvate, phosphate/water dikinase regulatory protein family. PSRP subfamily.

It catalyses the reaction [pyruvate, water dikinase] + ADP = [pyruvate, water dikinase]-phosphate + AMP + H(+). The catalysed reaction is [pyruvate, water dikinase]-phosphate + phosphate + H(+) = [pyruvate, water dikinase] + diphosphate. In terms of biological role, bifunctional serine/threonine kinase and phosphorylase involved in the regulation of the phosphoenolpyruvate synthase (PEPS) by catalyzing its phosphorylation/dephosphorylation. This chain is Putative phosphoenolpyruvate synthase regulatory protein, found in Paracidovorax citrulli (strain AAC00-1) (Acidovorax citrulli).